The primary structure comprises 534 residues: uncharacterized protein (534 aa).

Disordered stretches follow at residues 1 to 93, 123 to 260, 313 to 349, and 383 to 505; these read MSSS…DDTG, SPES…LSSA, AAAT…TFPS, and PWGA…QGCP. Positions 35–45 are enriched in pro residues; that stretch reads GPGPDPGPEPG. Residues serine 87 and serine 123 each carry the phosphoserine modification. Positions 145-161 are enriched in low complexity; the sequence is RGAAAQRCGEAARAEAG. Residues 230–239 show a composition bias toward basic and acidic residues; the sequence is SPKDPRDTPR.

This is an uncharacterized protein from Bos taurus (Bovine).